We begin with the raw amino-acid sequence, 908 residues long: UPF0182 protein Csac_0864 (908 aa).

7 consecutive transmembrane segments (helical) span residues 22-42 (FVIS…DLFL), 62-82 (FYVK…VFFV), 98-118 (ISLL…ALIA), 166-186 (FLFY…IVLY), 208-228 (HIFF…KYEM), 253-273 (YFRL…YFFI), and 286-306 (SYIG…YFVV).

It belongs to the UPF0182 family.

It is found in the cell membrane. The sequence is that of UPF0182 protein Csac_0864 from Caldicellulosiruptor saccharolyticus (strain ATCC 43494 / DSM 8903 / Tp8T 6331).